The following is a 74-amino-acid chain: UPF0154 protein LVIS_1358 (74 aa).

A helical transmembrane segment spans residues 4–24 (WIWILIVIVVGLACAAGGFYG).

This sequence belongs to the UPF0154 family.

Its subcellular location is the cell membrane. The chain is UPF0154 protein LVIS_1358 from Levilactobacillus brevis (strain ATCC 367 / BCRC 12310 / CIP 105137 / JCM 1170 / LMG 11437 / NCIMB 947 / NCTC 947) (Lactobacillus brevis).